The sequence spans 488 residues: Cytochrome P450 family 716 subfamily AD polypeptide 2 (488 aa).

Residues 5–25 (LLLLSTLLILTLCCHFFYLFI) traverse the membrane as a helical segment. Cys433 is a binding site for heme.

This sequence belongs to the cytochrome P450 family. The cofactor is heme. As to expression, expressed in maturing fruits and in juice vesicles.

It is found in the membrane. The catalysed reaction is (1R,2R,3S,8R,10R,11R,15S,16S)-3-(acetyloxy)-15-[(4R)-4-[(2S)-3,3-dimethyloxiran-2-yl]-1,4-dihydroxybutan-2-yl]-2,7,7,11,16-pentamethyl-5-oxo-6-oxatetracyclo[9.7.0.0(2,8).0(12,16)]octadec-12-en-10-yl acetate + reduced [NADPH--hemoprotein reductase] + O2 = (1R,2R,3S,8R,10R,11R,15S,16S)-3-(acetyloxy)-15-(1-hydroxy-4-oxobutan-2-yl)-2,7,7,11,16-pentamethyl-5-oxo-6-oxatetracyclo[9.7.0.0(2,8).0(12,16)]octadec-12-en-10-yl acetate + 2-methylpropanoate + oxidized [NADPH--hemoprotein reductase] + H2O + 2 H(+). The protein operates within secondary metabolite biosynthesis; terpenoid biosynthesis. In terms of biological role, monooxygenase involved in the biosynthesis of limonoids triterpene natural products such as limonin, a compound with insecticidal activity responsible for the bitter taste in citrus. Catalyzes the formation of (1R,2R,3S,8R,10R,11R,15S,16S)-3-(acetyloxy)-15-(1-hydroxy-4-oxobutan-2-yl)-2,7,7,11,16-pentamethyl-5-oxo-6-oxatetracyclo[9.7.0.0(2,8).0(12,16)]octadec-12-en-10-yl acetate. The protein is Cytochrome P450 family 716 subfamily AD polypeptide 2 of Citrus sinensis (Sweet orange).